A 500-amino-acid chain; its full sequence is Lysine--tRNA ligase (500 aa).

Positions 410 and 417 each coordinate Mg(2+).

The protein belongs to the class-II aminoacyl-tRNA synthetase family. Homodimer. The cofactor is Mg(2+).

The protein resides in the cytoplasm. It carries out the reaction tRNA(Lys) + L-lysine + ATP = L-lysyl-tRNA(Lys) + AMP + diphosphate. This chain is Lysine--tRNA ligase, found in Pseudomonas putida (strain ATCC 700007 / DSM 6899 / JCM 31910 / BCRC 17059 / LMG 24140 / F1).